Consider the following 461-residue polypeptide: Cysteine--tRNA ligase (461 aa).

Cys-28 serves as a coordination point for Zn(2+). The short motif at 30–40 (ITVYDLCHIGH) is the 'HIGH' region element. Zn(2+)-binding residues include Cys-209, His-234, and Glu-238. Residues 266–270 (KMSKS) carry the 'KMSKS' region motif. Lys-269 is a binding site for ATP.

This sequence belongs to the class-I aminoacyl-tRNA synthetase family. As to quaternary structure, monomer. Zn(2+) serves as cofactor.

The protein resides in the cytoplasm. It catalyses the reaction tRNA(Cys) + L-cysteine + ATP = L-cysteinyl-tRNA(Cys) + AMP + diphosphate. This Salmonella arizonae (strain ATCC BAA-731 / CDC346-86 / RSK2980) protein is Cysteine--tRNA ligase.